The following is a 98-amino-acid chain: NADH-ubiquinone oxidoreductase chain 4L (98 aa).

The next 3 membrane-spanning stretches (helical) occupy residues 1-21 (MTLIHMNILMAFSMSLMGLLM), 29-49 (ALLCLEGMMLSLFVLAALTIL), and 61-81 (IILLVFAACEAAIGLALLVMV).

Belongs to the complex I subunit 4L family. In terms of assembly, core subunit of respiratory chain NADH dehydrogenase (Complex I) which is composed of 45 different subunits.

The protein resides in the mitochondrion inner membrane. The enzyme catalyses a ubiquinone + NADH + 5 H(+)(in) = a ubiquinol + NAD(+) + 4 H(+)(out). In terms of biological role, core subunit of the mitochondrial membrane respiratory chain NADH dehydrogenase (Complex I) which catalyzes electron transfer from NADH through the respiratory chain, using ubiquinone as an electron acceptor. Part of the enzyme membrane arm which is embedded in the lipid bilayer and involved in proton translocation. In Balaenoptera physalus (Fin whale), this protein is NADH-ubiquinone oxidoreductase chain 4L (MT-ND4L).